Reading from the N-terminus, the 208-residue chain is Cytochrome c biogenesis ATP-binding export protein CcmA (208 aa).

The ABC transporter domain maps to 3 to 206 (LSGKDLTAYR…LEKFLPPQEK (204 aa)). Residue 35–42 (GPNGIGKS) coordinates ATP.

This sequence belongs to the ABC transporter superfamily. CcmA exporter (TC 3.A.1.107) family. As to quaternary structure, the complex is composed of two ATP-binding proteins (CcmA) and two transmembrane proteins (CcmB).

The protein resides in the cell inner membrane. It catalyses the reaction heme b(in) + ATP + H2O = heme b(out) + ADP + phosphate + H(+). In terms of biological role, part of the ABC transporter complex CcmAB involved in the biogenesis of c-type cytochromes; once thought to export heme, this seems not to be the case, but its exact role is uncertain. Responsible for energy coupling to the transport system. The polypeptide is Cytochrome c biogenesis ATP-binding export protein CcmA (Bartonella henselae (strain ATCC 49882 / DSM 28221 / CCUG 30454 / Houston 1) (Rochalimaea henselae)).